Here is a 454-residue protein sequence, read N- to C-terminus: N-myc 2 proto-oncogene protein (454 aa).

Disordered stretches follow at residues 132-166 (SEKM…HSGT), 230-269 (VAAP…DEEE), and 325-374 (PSPY…VRRR). The span at 151–161 (PGAGAASPAGR) shows a compositional bias: low complexity. Positions 256 to 269 (ALSDEVDEEEDEEE) are enriched in acidic residues. A compositionally biased stretch (basic and acidic residues) spans 363 to 374 (RKSDSEDSVRRR). A bHLH domain is found at 371–423 (VRRRNHNILERQRRNDLRSSFTTLRDHVPELVKNEKAAKVVILKKACEYVHYL). A leucine-zipper region spans residues 423 to 444 (LQAKEHQLLMEKEKLQARQQQL).

Efficient DNA binding requires dimerization with another bHLH protein.

It localises to the nucleus. The chain is N-myc 2 proto-oncogene protein (N-MYC2) from Marmota monax (Woodchuck).